Reading from the N-terminus, the 283-residue chain is Cyclin-C (283 aa).

The Cyclin N-terminal domain maps to Asp-20–Ile-151. A disordered region spans residues Thr-252–Ser-283. Polar residues predominate over residues Pro-272–Ser-283. Ser-275 carries the post-translational modification Phosphoserine.

This sequence belongs to the cyclin family. Cyclin C subfamily. Component of the Mediator complex, which is composed of MED1, MED4, MED6, MED7, MED8, MED9, MED10, MED11, MED12, MED13, MED13L, MED14, MED15, MED16, MED17, MED18, MED19, MED20, MED21, MED22, MED23, MED24, MED25, MED26, MED27, MED29, MED30, MED31, CCNC, CDK8 and CDC2L6/CDK11. The MED12, MED13, CCNC and CDK8 subunits form a distinct module termed the CDK8 module. Mediator containing the CDK8 module is less active than Mediator lacking this module in supporting transcriptional activation. Individual preparations of the Mediator complex lacking one or more distinct subunits have been variously termed ARC, CRSP, DRIP, PC2, SMCC and TRAP. The cylin/CDK pair formed by CCNC/CDK8 also associates with the large subunit of RNA polymerase II.

Its subcellular location is the nucleus. Its function is as follows. Component of the Mediator complex, a coactivator involved in regulated gene transcription of nearly all RNA polymerase II-dependent genes. Mediator functions as a bridge to convey information from gene-specific regulatory proteins to the basal RNA polymerase II transcription machinery. Mediator is recruited to promoters by direct interactions with regulatory proteins and serves as a scaffold for the assembly of a functional preinitiation complex with RNA polymerase II and the general transcription factors. Binds to and activates cyclin-dependent kinase CDK8 that phosphorylates the CTD (C-terminal domain) of the large subunit of RNA polymerase II (RNAp II), which may inhibit the formation of a transcription initiation complex. The chain is Cyclin-C (Ccnc) from Mus musculus (Mouse).